Here is a 334-residue protein sequence, read N- to C-terminus: CRISPR-associated endonuclease Cas1 (334 aa).

The Mn(2+) site is built by Glu-161, His-226, and Glu-241.

It belongs to the CRISPR-associated endonuclease Cas1 family. As to quaternary structure, homodimer, forms a heterotetramer with a Cas2 homodimer. Mg(2+) is required as a cofactor. Requires Mn(2+) as cofactor.

Functionally, CRISPR (clustered regularly interspaced short palindromic repeat), is an adaptive immune system that provides protection against mobile genetic elements (viruses, transposable elements and conjugative plasmids). CRISPR clusters contain spacers, sequences complementary to antecedent mobile elements, and target invading nucleic acids. CRISPR clusters are transcribed and processed into CRISPR RNA (crRNA). Acts as a dsDNA endonuclease. Involved in the integration of spacer DNA into the CRISPR cassette. This Methanothermobacter thermautotrophicus (strain ATCC 29096 / DSM 1053 / JCM 10044 / NBRC 100330 / Delta H) (Methanobacterium thermoautotrophicum) protein is CRISPR-associated endonuclease Cas1.